A 178-amino-acid chain; its full sequence is CASP-like protein 4D1 (178 aa).

Topologically, residues 1 to 14 are cytoplasmic; it reads MAPPPPSPPSVTLR. Residues 15 to 35 form a helical membrane-spanning segment; sequence TVLLLLRVLTAAFLVITVVLI. The Extracellular portion of the chain corresponds to 36–60; the sequence is STNTVTLEVSSTSIKMRFNDVYAYR. A helical transmembrane segment spans residues 61-81; the sequence is YMLSAAVIGLLYAVVQLFLTI. Topologically, residues 82-149 are cytoplasmic; sequence SQFATGTTHP…KFFSKGYASA (68 aa). The chain crosses the membrane as a helical span at residues 150-170; sequence SLLLFAFVSLAVLSVFSSLAL. The Extracellular segment spans residues 171 to 178; that stretch reads SKRPIQVS.

It belongs to the Casparian strip membrane proteins (CASP) family. As to quaternary structure, homodimer and heterodimers.

It is found in the cell membrane. This is CASP-like protein 4D1 from Arabidopsis lyrata subsp. lyrata (Lyre-leaved rock-cress).